Here is a 198-residue protein sequence, read N- to C-terminus: Recombination protein RecR (198 aa).

A C4-type zinc finger spans residues 57-72 (CSVCGHITENDPCYIC). The region spanning 80-175 (SVICVVEDDK…KVTRLAQGLS (96 aa)) is the Toprim domain.

Belongs to the RecR family.

May play a role in DNA repair. It seems to be involved in an RecBC-independent recombinational process of DNA repair. It may act with RecF and RecO. This chain is Recombination protein RecR, found in Staphylococcus aureus (strain MRSA252).